The primary structure comprises 409 residues: Failed axon connections homolog (409 aa).

A helical membrane pass occupies residues 68–88 (YLTGGALLAAAAYLLHELLVI). The interval 372 to 409 (DEGAENSFSRTPDTDFTGHSLFDSDVDMDDYTEHEQCK) is disordered.

Belongs to the FAX family.

The protein resides in the membrane. May play a role in axonal development. The polypeptide is Failed axon connections homolog (Faxc) (Rattus norvegicus (Rat)).